The chain runs to 414 residues: MQRDDGFVYCYGNLYSLLLYWGLVTIRVRSPDRGGAFSNRWTVCYALFTRSFMVICFMATVMTKLRDPEMSAAMFGHLSPLVKAIFTWECLSCSVTYIEYCLSLDLQKDRHLKLVARMQEFDRSVLMVFPHVQWNYRRARLKYWYGTVIVGFCFFSFSISLIFDTTRCTCGIPSTLLMAFTYTLLTSSVGLLGFVHIGIMDFIRVRLRLVQQLLHQLYQADDSSEVHERIAYLFEMSKRCSFLLAELNGVFGFAAAAGIFYDFTIMTCFVYVICQKLLEREPWDPEYVYMLLHVAIHTYKVVITSTYGYLLLREKRNCMHLLSQYSRYFSGQDVARRKTEDFQHWRMHNRQAAMVGSTTLLSVSTIYLVYNGMANYVIILVQLLFQQQQIKDHQLTSGKDVDIVGPMGPITHMD.

Residues 1–5 (MQRDD) are Cytoplasmic-facing. The chain crosses the membrane as a helical span at residues 6-26 (GFVYCYGNLYSLLLYWGLVTI). Residues 27-40 (RVRSPDRGGAFSNR) are Extracellular-facing. The helical transmembrane segment at 41–61 (WTVCYALFTRSFMVICFMATV) threads the bilayer. Residues 62–142 (MTKLRDPEMS…QWNYRRARLK (81 aa)) are Cytoplasmic-facing. The chain crosses the membrane as a helical span at residues 143–163 (YWYGTVIVGFCFFSFSISLIF). The Extracellular segment spans residues 164-182 (DTTRCTCGIPSTLLMAFTY). The helical transmembrane segment at 183–203 (TLLTSSVGLLGFVHIGIMDFI) threads the bilayer. Residues 204–249 (RVRLRLVQQLLHQLYQADDSSEVHERIAYLFEMSKRCSFLLAELNG) are Cytoplasmic-facing. The chain crosses the membrane as a helical span at residues 250-270 (VFGFAAAAGIFYDFTIMTCFV). Over 271–291 (YVICQKLLEREPWDPEYVYML) the chain is Extracellular. A helical transmembrane segment spans residues 292 to 312 (LHVAIHTYKVVITSTYGYLLL). Residues 313–364 (REKRNCMHLLSQYSRYFSGQDVARRKTEDFQHWRMHNRQAAMVGSTTLLSVS) are Cytoplasmic-facing. Residues 365–385 (TIYLVYNGMANYVIILVQLLF) form a helical membrane-spanning segment. At 386 to 414 (QQQQIKDHQLTSGKDVDIVGPMGPITHMD) the chain is on the extracellular side.

This sequence belongs to the insect chemoreceptor superfamily. Gustatory receptor (GR) family. Gr57a subfamily. In terms of tissue distribution, expressed in neurons of the terminal external chemosensory organ of larvae.

The protein resides in the cell membrane. Functionally, probable gustatory receptor which mediates acceptance or avoidance behavior, depending on its substrates. In Drosophila melanogaster (Fruit fly), this protein is Putative gustatory receptor 47b (Gr47b).